The primary structure comprises 445 residues: CBL-interacting serine/threonine-protein kinase 8 (445 aa).

In terms of domain architecture, Protein kinase spans 9 to 262 (YELGRTIGEG…IAEIRKDEWF (254 aa)). Residues 15-23 (IGEGTFAKV) and lysine 38 contribute to the ATP site. Residue aspartate 132 is the Proton acceptor of the active site. The segment at 150 to 177 (DFGLSALPEQGVTILKTTCGTPNYVAPE) is activation loop. Serine 154 carries the post-translational modification Phosphoserine. Phosphothreonine is present on threonine 166. The 25-residue stretch at 302-326 (TGPLTLNAFDLIILSQGLNLATLFD) folds into the NAF domain. The interval 333-362 (KHQTRFISHKPANVVLSSMEVVSQSMGFKT) is PPI.

It belongs to the protein kinase superfamily. CAMK Ser/Thr protein kinase family. SNF1 subfamily. As to quaternary structure, interacts with CBL1 and CBL9. Mn(2+) is required as a cofactor. Mostly expressed in roots, and, to a lower extent, in leaves, stems, flowers, and siliques.

The catalysed reaction is L-seryl-[protein] + ATP = O-phospho-L-seryl-[protein] + ADP + H(+). It catalyses the reaction L-threonyl-[protein] + ATP = O-phospho-L-threonyl-[protein] + ADP + H(+). Its function is as follows. CIPK serine-threonine protein kinases interact with CBL proteins. Binding of a CBL protein to the regulatory NAF domain of CIPK protein lead to the activation of the kinase in a calcium-dependent manner. The chain is CBL-interacting serine/threonine-protein kinase 8 (CIPK8) from Arabidopsis thaliana (Mouse-ear cress).